Consider the following 257-residue polypeptide: 1-(5-phosphoribosyl)-5-[(5-phosphoribosylamino)methylideneamino] imidazole-4-carboxamide isomerase (257 aa).

The active-site Proton acceptor is the Asp-8. The active-site Proton donor is the Asp-131.

The protein belongs to the HisA/HisF family.

It localises to the cytoplasm. The catalysed reaction is 1-(5-phospho-beta-D-ribosyl)-5-[(5-phospho-beta-D-ribosylamino)methylideneamino]imidazole-4-carboxamide = 5-[(5-phospho-1-deoxy-D-ribulos-1-ylimino)methylamino]-1-(5-phospho-beta-D-ribosyl)imidazole-4-carboxamide. Its pathway is amino-acid biosynthesis; L-histidine biosynthesis; L-histidine from 5-phospho-alpha-D-ribose 1-diphosphate: step 4/9. The sequence is that of 1-(5-phosphoribosyl)-5-[(5-phosphoribosylamino)methylideneamino] imidazole-4-carboxamide isomerase from Nitrosospira multiformis (strain ATCC 25196 / NCIMB 11849 / C 71).